A 944-amino-acid chain; its full sequence is Thyroid peroxidase (944 aa).

Residues 1–30 (MVGLVPAGSAWGGRALAVLGVTLLVALARG) form the signal peptide. At 31–858 (LLPFFLGGRD…SGRLPKASLV (828 aa)) the chain is on the extracellular side. Residue N141 is glycosylated (N-linked (GlcNAc...) asparagine). An intrachain disulfide couples C154 to C170. A heme b-binding site is contributed by D250. The active-site Proton acceptor is the H251. Position 252 (D252) interacts with Ca(2+). Disulfide bonds link C271-C281 and C275-C295. N316 carries an N-linked (GlcNAc...) asparagine glycan. 4 residues coordinate Ca(2+): T330, F332, D334, and S336. N-linked (GlcNAc...) asparagine glycosylation is present at N351. Heme b-binding residues include E408 and H503. 7 disulfide bridges follow: C606–C663, C704–C729, C750–C790, C776–C802, C808–C822, C816–C831, and C833–C846. An N-linked (GlcNAc...) asparagine glycan is attached at N623. In terms of domain architecture, Sushi spans 748 to 804 (DACGLPDSLDNGDVVLCGEAGRRVLVFSCRHGFKLQGPEQVACSPRGGAVRAPVCRD). Residues 804–847 (DINECEDASHPPCHGSARCRNTKGGFRCECTDPAVLGEDGTTCV) form the EGF-like; calcium-binding domain. A helical membrane pass occupies residues 859–879 (SIALGIVLVVGLAGLTWTLVC). Residues 880–944 (RWAHAGRKAS…RSHVAQGSPA (65 aa)) are Cytoplasmic-facing. Residues 895–944 (LGGRGAPPPGRGAGQDGASGSLVPPLGPQGRTRAVDPTSSRSHVAQGSPA) are disordered. The span at 931–944 (PTSSRSHVAQGSPA) shows a compositional bias: polar residues.

This sequence belongs to the peroxidase family. XPO subfamily. As to quaternary structure, interacts with DUOX1, DUOX2 and CYBA. Ca(2+) serves as cofactor. Requires heme b as cofactor. In terms of processing, heme is covalently bound through a H(2)O(2)-dependent autocatalytic process. Heme insertion is important for the delivery of protein at the cell surface. Post-translationally, cleaved in its N-terminal part.

The protein resides in the membrane. It carries out the reaction 2 iodide + H2O2 + 2 H(+) = diiodine + 2 H2O. It catalyses the reaction [thyroglobulin]-L-tyrosine + iodide + H2O2 + H(+) = [thyroglobulin]-3-iodo-L-tyrosine + 2 H2O. The enzyme catalyses [thyroglobulin]-3-iodo-L-tyrosine + iodide + H2O2 + H(+) = [thyroglobulin]-3,5-diiodo-L-tyrosine + 2 H2O. The catalysed reaction is 2 [thyroglobulin]-3,5-diiodo-L-tyrosine + H2O2 = [thyroglobulin]-L-thyroxine + [thyroglobulin]-dehydroalanine + 2 H2O. It carries out the reaction [thyroglobulin]-3-iodo-L-tyrosine + [thyroglobulin]-3,5-diiodo-L-tyrosine + H2O2 = [thyroglobulin]-3,3',5-triiodo-L-thyronine + [thyroglobulin]-dehydroalanine + 2 H2O. The protein operates within hormone biosynthesis; thyroid hormone biosynthesis. Iodination and coupling of the hormonogenic tyrosines in thyroglobulin to yield the thyroid hormones T(3) and T(4). This Canis lupus familiaris (Dog) protein is Thyroid peroxidase (TPO).